The chain runs to 75 residues: Small ribosomal subunit protein bS18 (75 aa).

The protein belongs to the bacterial ribosomal protein bS18 family. As to quaternary structure, part of the 30S ribosomal subunit. Forms a tight heterodimer with protein bS6.

Its function is as follows. Binds as a heterodimer with protein bS6 to the central domain of the 16S rRNA, where it helps stabilize the platform of the 30S subunit. In Klebsiella pneumoniae (strain 342), this protein is Small ribosomal subunit protein bS18.